The primary structure comprises 108 residues: uncharacterized protein (108 aa).

This is an uncharacterized protein from Rickettsia prowazekii (strain Madrid E).